Consider the following 502-residue polypeptide: Medium/long-chain-fatty-acid--CoA ligase FadD17 (502 aa).

Belongs to the ATP-dependent AMP-binding enzyme family.

The enzyme catalyses a medium-chain fatty acid + ATP + CoA = a medium-chain fatty acyl-CoA + AMP + diphosphate. It catalyses the reaction a long-chain fatty acid + ATP + CoA = a long-chain fatty acyl-CoA + AMP + diphosphate. The protein operates within lipid metabolism; fatty acid biosynthesis. Its function is as follows. Catalyzes the activation of medium/long-chain fatty acids as acyl-coenzyme A (acyl-CoA), which are then transferred to the multifunctional polyketide synthase (PKS) type III for further chain extension. The polypeptide is Medium/long-chain-fatty-acid--CoA ligase FadD17 (fadD17) (Mycobacterium bovis (strain ATCC BAA-935 / AF2122/97)).